The primary structure comprises 311 residues: Porphobilinogen deaminase (311 aa).

Cys245 bears the S-(dipyrrolylmethanemethyl)cysteine mark.

This sequence belongs to the HMBS family. In terms of assembly, monomer. Requires dipyrromethane as cofactor.

The catalysed reaction is 4 porphobilinogen + H2O = hydroxymethylbilane + 4 NH4(+). The protein operates within porphyrin-containing compound metabolism; protoporphyrin-IX biosynthesis; coproporphyrinogen-III from 5-aminolevulinate: step 2/4. Its function is as follows. Tetrapolymerization of the monopyrrole PBG into the hydroxymethylbilane pre-uroporphyrinogen in several discrete steps. This is Porphobilinogen deaminase from Deinococcus deserti (strain DSM 17065 / CIP 109153 / LMG 22923 / VCD115).